A 188-amino-acid polypeptide reads, in one-letter code: Peptidyl-tRNA hydrolase (188 aa).

Residue Tyr-14 coordinates tRNA. The Proton acceptor role is filled by His-19. TRNA is bound by residues Tyr-60 and Asn-62.

The protein belongs to the PTH family. As to quaternary structure, monomer.

The protein localises to the cytoplasm. The catalysed reaction is an N-acyl-L-alpha-aminoacyl-tRNA + H2O = an N-acyl-L-amino acid + a tRNA + H(+). Its function is as follows. Hydrolyzes ribosome-free peptidyl-tRNAs (with 1 or more amino acids incorporated), which drop off the ribosome during protein synthesis, or as a result of ribosome stalling. In terms of biological role, catalyzes the release of premature peptidyl moieties from peptidyl-tRNA molecules trapped in stalled 50S ribosomal subunits, and thus maintains levels of free tRNAs and 50S ribosomes. The chain is Peptidyl-tRNA hydrolase from Mycoplasmopsis agalactiae (strain NCTC 10123 / CIP 59.7 / PG2) (Mycoplasma agalactiae).